Reading from the N-terminus, the 292-residue chain is Small ribosomal subunit protein uS2 (292 aa).

Residues 230 to 292 (RSGGAPGSEK…KKEAGSGEEA (63 aa)) are disordered. Basic and acidic residues-rich tracts occupy residues 247-259 (EWER…KTEA) and 271-292 (PAKE…GEEA).

Belongs to the universal ribosomal protein uS2 family.

The protein is Small ribosomal subunit protein uS2 of Thermobifida fusca (strain YX).